Reading from the N-terminus, the 265-residue chain is SPQPLEQIKLSESQLSGRVGMIEMDLASGRTLTAWRADERFPMMSTFKVVLCGAVLARVDAGDEQLERKIHYRQQDLVDYSPVSEKHLADGMTVGELCAAAITMSDNSAANLLLATVGGPAGLTAFLRQIGDNVTRLDRWETELNEALPGDARDTTTPASMAATLRKLLTSQRLSARSQLQLLQWMVDDRVAGPLIRSVLPAGWFIADKTGASKRGARGIVALLGPNNKAERIVVIYLRDTPASMAERNQQIAGIGAALIEHWQR.

The active-site Acyl-ester intermediate is the Ser45. Residues Cys52 and Cys98 are joined by a disulfide bond. Glu143 acts as the Proton acceptor in catalysis. 209–211 (KTG) lines the substrate pocket.

This sequence belongs to the class-A beta-lactamase family.

It catalyses the reaction a beta-lactam + H2O = a substituted beta-amino acid. Functionally, SHV enzymes hydrolyze broad spectrum cephalosporins notably cefotaxime and ceftazidime. SHV-4 causes particularly high levels of resistance to aztreonam and ceftazidime. In Klebsiella pneumoniae, this protein is Beta-lactamase SHV-4 (bla).